A 50-amino-acid polypeptide reads, in one-letter code: PhoP/PhoQ regulator MgrB (50 aa).

Over 1–4 (MLDL) the chain is Cytoplasmic. A helical membrane pass occupies residues 5 to 27 (NITKLVTTVVIIAACCLFYLLAL). At 28-50 (DSYCDQGGTFSTGICAITTIVPW) the chain is on the periplasmic side.

Belongs to the MgrB family. As to quaternary structure, probably interacts with the periplasmic domain of PhoQ.

Its subcellular location is the cell inner membrane. PhoP-regulated transcription is redox-sensitive, being activated when the periplasm becomes more reducing. MgrB acts between DsbA/DsbB and PhoP/PhoQ in this pathway. Represses PhoP/PhoQ signaling, possibly by binding to the periplasmic domain of PhoQ, altering its activity and that of downstream effector PhoP. This is PhoP/PhoQ regulator MgrB from Yersinia pestis.